Consider the following 407-residue polypeptide: Probable tRNA sulfurtransferase (407 aa).

The 105-residue stretch at 61–165 (NEITYRLSKI…LDAIYMYEEV (105 aa)) folds into the THUMP domain. ATP-binding positions include 183 to 184 (ML), 208 to 209 (HF), Arg265, Gly287, and Gln296.

This sequence belongs to the ThiI family.

It is found in the cytoplasm. It carries out the reaction [ThiI sulfur-carrier protein]-S-sulfanyl-L-cysteine + a uridine in tRNA + 2 reduced [2Fe-2S]-[ferredoxin] + ATP + H(+) = [ThiI sulfur-carrier protein]-L-cysteine + a 4-thiouridine in tRNA + 2 oxidized [2Fe-2S]-[ferredoxin] + AMP + diphosphate. It catalyses the reaction [ThiS sulfur-carrier protein]-C-terminal Gly-Gly-AMP + S-sulfanyl-L-cysteinyl-[cysteine desulfurase] + AH2 = [ThiS sulfur-carrier protein]-C-terminal-Gly-aminoethanethioate + L-cysteinyl-[cysteine desulfurase] + A + AMP + 2 H(+). It participates in cofactor biosynthesis; thiamine diphosphate biosynthesis. Catalyzes the ATP-dependent transfer of a sulfur to tRNA to produce 4-thiouridine in position 8 of tRNAs, which functions as a near-UV photosensor. Also catalyzes the transfer of sulfur to the sulfur carrier protein ThiS, forming ThiS-thiocarboxylate. This is a step in the synthesis of thiazole, in the thiamine biosynthesis pathway. The sulfur is donated as persulfide by IscS. This Staphylococcus aureus (strain NCTC 8325 / PS 47) protein is Probable tRNA sulfurtransferase.